We begin with the raw amino-acid sequence, 32 residues long: Photosystem II reaction center protein T (32 aa).

The helical transmembrane segment at 3 to 23 (ALVYTFLLIGTLMVIFFAVFF) threads the bilayer.

Belongs to the PsbT family. As to quaternary structure, PSII is composed of 1 copy each of membrane proteins PsbA, PsbB, PsbC, PsbD, PsbE, PsbF, PsbH, PsbI, PsbJ, PsbK, PsbL, PsbM, PsbT, PsbX, PsbY, PsbZ, Psb30/Ycf12, at least 3 peripheral proteins of the oxygen-evolving complex and a large number of cofactors. It forms dimeric complexes.

Its subcellular location is the plastid. The protein localises to the chloroplast thylakoid membrane. Its function is as follows. Found at the monomer-monomer interface of the photosystem II (PS II) dimer, plays a role in assembly and dimerization of PSII. PSII is a light-driven water plastoquinone oxidoreductase, using light energy to abstract electrons from H(2)O, generating a proton gradient subsequently used for ATP formation. The polypeptide is Photosystem II reaction center protein T (Thalassiosira pseudonana (Marine diatom)).